The following is a 214-amino-acid chain: Pyridoxine/pyridoxamine 5'-phosphate oxidase (214 aa).

Substrate-binding positions include 9-12 (RRSY) and K68. Residues 63-68 (RVVLLK), 78-79 (YT), K85, and Q107 contribute to the FMN site. Y125, R129, and S133 together coordinate substrate. FMN is bound by residues 142 to 143 (QS) and W187. Position 193-195 (193-195 (RLH)) interacts with substrate. R197 serves as a coordination point for FMN.

This sequence belongs to the pyridoxamine 5'-phosphate oxidase family. As to quaternary structure, homodimer. It depends on FMN as a cofactor.

It catalyses the reaction pyridoxamine 5'-phosphate + O2 + H2O = pyridoxal 5'-phosphate + H2O2 + NH4(+). The catalysed reaction is pyridoxine 5'-phosphate + O2 = pyridoxal 5'-phosphate + H2O2. It participates in cofactor metabolism; pyridoxal 5'-phosphate salvage; pyridoxal 5'-phosphate from pyridoxamine 5'-phosphate: step 1/1. It functions in the pathway cofactor metabolism; pyridoxal 5'-phosphate salvage; pyridoxal 5'-phosphate from pyridoxine 5'-phosphate: step 1/1. Functionally, catalyzes the oxidation of either pyridoxine 5'-phosphate (PNP) or pyridoxamine 5'-phosphate (PMP) into pyridoxal 5'-phosphate (PLP). The polypeptide is Pyridoxine/pyridoxamine 5'-phosphate oxidase (Christiangramia forsetii (strain DSM 17595 / CGMCC 1.15422 / KT0803) (Gramella forsetii)).